A 562-amino-acid polypeptide reads, in one-letter code: MGTIRSSALILACLALASAASEGAFKVSDQREMKPEHLFQHLHEVGYAAPPSPPQTRRLQVHHSETSPHDPPLFEEQKEVQPPSSPEDIPVYEEEWLTFLNPNVGKVDPALPQEAIPLQKEQPPPRIPIEQKEIDPPVQHQEEIVQSRQKEEKPPTLTGQHPPEPRTWNPARHCQQGRRGIWGHRLDGFPPGRPSPDNLKQICLPERQHVVYGPWNLPQTGYSHLSRQGEALNLLETGYSRCCRCRSDTNRLDCVKLVWEDAMTQFCEAEFSVKTRPHLCCKQRGEERFSCFQKEAPRPDYLLRPCPIHQTGISSGTQLPFPPGLPTPDNVKNICLLRRFRSVPRNLPATDAIQRQLQALTRLETEFQRCCRQGHNHTCTWKAWEDTLDGYCDRELAIKTHPHSCCHYPPSPARDECFAHLAPYPNYDRDLLTVDLSRVTPNLMDHLCGNGRVLSKHKQIPGLIQNMTVRCCELPYPEQACCGEEEKLAFIEDLCGPRRNSWKDPALCCTLSPGDKQANCFNTNYLRNVALVAGDTGNATGLGQQGPTGGTNVGPAPGSKEE.

Residues 1–19 (MGTIRSSALILACLALASA) form the signal peptide. 2 disordered regions span residues 46-87 (GYAA…SSPE) and 119-171 (QKEQ…WNPA). Basic and acidic residues predominate over residues 129–154 (IEQKEIDPPVQHQEEIVQSRQKEEKP). A run of 2 repeats spans residues 172–301 (RHCQ…RPDY) and 305–427 (PCPI…YPNY). A 2 X approximate repeats region spans residues 172–427 (RHCQQGRRGI…FAHLAPYPNY (256 aa)). 3 N-linked (GlcNAc...) asparagine glycosylation sites follow: Asn-376, Asn-466, and Asn-538. The disordered stretch occupies residues 539–562 (ATGLGQQGPTGGTNVGPAPGSKEE). Positions 543–552 (GQQGPTGGTN) are enriched in gly residues. The residue at position 559 (Ser-559) is a Phosphoserine.

Interacts (via C-terminus) with HSPG2 (via C-terminus). Interacts with EFEMP1/FBLN3 and LAMB3. Interacts with MMP9.

It localises to the secreted. Its subcellular location is the extracellular space. It is found in the extracellular matrix. Involved in endochondral bone formation as negative regulator of bone mineralization. Stimulates the proliferation of endothelial cells and promotes angiogenesis. Inhibits MMP9 proteolytic activity. The protein is Extracellular matrix protein 1 (Ecm1) of Rattus norvegicus (Rat).